The sequence spans 167 residues: UPF0598 protein CG30010 (167 aa).

The protein belongs to the UPF0598 family.

This chain is UPF0598 protein CG30010, found in Drosophila melanogaster (Fruit fly).